Here is a 634-residue protein sequence, read N- to C-terminus: AAl-toxin cluster-specific transcription factor ALT13 (634 aa).

Positions 30–56 (CENCKRRKVRCSGANPCEQCLKVNVHC) form a DNA-binding region, zn(2)-C6 fungal-type. The segment at 66–89 (RRSVPNSGADKNNQQGDTDRHNGA) is disordered. The span at 69-81 (VPNSGADKNNQQG) shows a compositional bias: polar residues.

Its subcellular location is the nucleus. In terms of biological role, transcription factor that regulates the expression of the gene cluster that mediates the biosynthesis of AAL-toxins, sphinganine-analog mycotoxins responsible for Alternaria stem canker on tomato by the tomato pathotype. In Alternaria alternata (Alternaria rot fungus), this protein is AAl-toxin cluster-specific transcription factor ALT13.